Here is a 440-residue protein sequence, read N- to C-terminus: Acetylornithine deacetylase (440 aa).

His-101 provides a ligand contact to Zn(2+). Residue Asp-103 is part of the active site. A Zn(2+)-binding site is contributed by Asp-133. Glu-167 acts as the Proton acceptor in catalysis. Residues Glu-168 and His-412 each coordinate Zn(2+).

This sequence belongs to the peptidase M20A family. ArgE subfamily. In terms of assembly, homodimer. Zn(2+) is required as a cofactor. It depends on Co(2+) as a cofactor.

It carries out the reaction N(2)-acetyl-L-ornithine + H2O = L-ornithine + acetate. Its pathway is amino-acid biosynthesis; L-arginine biosynthesis; L-ornithine from N(2)-acetyl-L-ornithine (linear): step 1/1. The chain is Acetylornithine deacetylase from Arabidopsis thaliana (Mouse-ear cress).